Reading from the N-terminus, the 592-residue chain is A-type ATP synthase subunit A (592 aa).

ATP is bound at residue 234-241; sequence GGFGTGKT.

This sequence belongs to the ATPase alpha/beta chains family. In terms of assembly, has multiple subunits with at least A(3), B(3), C, D, E, F, H, I and proteolipid K(x).

It is found in the cell membrane. It carries out the reaction ATP + H2O + 4 H(+)(in) = ADP + phosphate + 5 H(+)(out). In terms of biological role, component of the A-type ATP synthase that produces ATP from ADP in the presence of a proton gradient across the membrane. The A chain is the catalytic subunit. The chain is A-type ATP synthase subunit A from Cenarchaeum symbiosum (strain A).